We begin with the raw amino-acid sequence, 943 residues long: Isoleucine--tRNA ligase (943 aa).

A 'HIGH' region motif is present at residues 58–68 (PYANGTIHIGH). An L-isoleucyl-5'-AMP-binding site is contributed by glutamate 567. The 'KMSKS' region signature appears at 608–612 (KMSKS). Lysine 611 is a binding site for ATP. Positions 906, 909, 926, and 929 each coordinate Zn(2+).

This sequence belongs to the class-I aminoacyl-tRNA synthetase family. IleS type 1 subfamily. In terms of assembly, monomer. It depends on Zn(2+) as a cofactor.

It is found in the cytoplasm. It catalyses the reaction tRNA(Ile) + L-isoleucine + ATP = L-isoleucyl-tRNA(Ile) + AMP + diphosphate. Functionally, catalyzes the attachment of isoleucine to tRNA(Ile). As IleRS can inadvertently accommodate and process structurally similar amino acids such as valine, to avoid such errors it has two additional distinct tRNA(Ile)-dependent editing activities. One activity is designated as 'pretransfer' editing and involves the hydrolysis of activated Val-AMP. The other activity is designated 'posttransfer' editing and involves deacylation of mischarged Val-tRNA(Ile). In Pseudomonas fluorescens (strain SBW25), this protein is Isoleucine--tRNA ligase.